The sequence spans 211 residues: Transcriptional regulator NarO (211 aa).

One can recognise an HTH bat-type domain in the interval 154-205 (LTARQREVLETAHEMGYFEHPREANATEVAAALDINRSTFTEHLSAAQSKLL).

Its function is as follows. Activates transcription of the denitrifying genes (nitrate reductase narA and nitrite reductase nirK) under anaerobic conditions. The protein is Transcriptional regulator NarO of Haloferax volcanii (strain ATCC 29605 / DSM 3757 / JCM 8879 / NBRC 14742 / NCIMB 2012 / VKM B-1768 / DS2) (Halobacterium volcanii).